The chain runs to 469 residues: Glutamate--tRNA ligase (469 aa).

The 'HIGH' region motif lies at 10-20 (PSPTGYLHVGG). 4 residues coordinate Zn(2+): cysteine 99, cysteine 101, cysteine 126, and aspartate 128. The 'KMSKS' region motif lies at 238–242 (RLSKR). Residue lysine 241 participates in ATP binding.

Belongs to the class-I aminoacyl-tRNA synthetase family. Glutamate--tRNA ligase type 1 subfamily. In terms of assembly, monomer. Zn(2+) serves as cofactor.

Its subcellular location is the cytoplasm. The catalysed reaction is tRNA(Glu) + L-glutamate + ATP = L-glutamyl-tRNA(Glu) + AMP + diphosphate. Its function is as follows. Catalyzes the attachment of glutamate to tRNA(Glu) in a two-step reaction: glutamate is first activated by ATP to form Glu-AMP and then transferred to the acceptor end of tRNA(Glu). The sequence is that of Glutamate--tRNA ligase from Pelobacter propionicus (strain DSM 2379 / NBRC 103807 / OttBd1).